A 451-amino-acid polypeptide reads, in one-letter code: Serine/threonine-protein phosphatase 2A 55 kDa regulatory subunit B delta isoform (451 aa).

7 WD repeats span residues 30–69, 95–136, 179–217, 228–268, 287–325, 342–383, and 418–451; these read AEAD…KSRP, EIEE…KRAE, AHTY…RSFN, ELTE…LCDR, EIIS…RPVE, ENDC…DITL, and DFNK…DKIN.

The protein belongs to the phosphatase 2A regulatory subunit B family. PP2A consists of a common heterodimeric core enzyme, composed of a 36 kDa catalytic subunit (subunit C) and a 65 kDa constant regulatory subunit (PR65 or subunit A), that associates with a variety of regulatory subunits.

It localises to the cytoplasm. Its function is as follows. Substrate-recognition subunit of protein phosphatase 2A (PP2A) that plays a key role in cell cycle by controlling mitosis entry and exit. The activity of PP2A complexes containing PPP2R2D (PR55-delta) fluctuate during the cell cycle: the activity is high in interphase and low in mitosis. In Gallus gallus (Chicken), this protein is Serine/threonine-protein phosphatase 2A 55 kDa regulatory subunit B delta isoform (PPP2R2D).